The sequence spans 131 residues: Type-5 thionin (131 aa).

The first 29 residues, 1 to 29 (MGGGQKGLESAIVCLLVLGLVLEQVQVEG), serve as a signal peptide directing secretion. Residues 67 to 131 (LASVRSSDEP…GDTLLASLDD (65 aa)) constitute a propeptide, acidic domain.

The protein belongs to the plant thionin (TC 1.C.44) family. Post-translationally, is disulfide-linked. As to expression, developing endosperm.

The protein resides in the secreted. Thionins are small plant proteins which are toxic to animal cells. They seem to exert their toxic effect at the level of the cell membrane. Their precise function is not known. The polypeptide is Type-5 thionin (TTHV) (Triticum aestivum (Wheat)).